The sequence spans 218 residues: C-type lectin domain family 2 member H (218 aa).

At 1-52 (MNAAKVETSSMGMLQRADLTAADCLQEGEMGKKIQGKCFRIISTVSPVKLYC) the chain is on the cytoplasmic side. A helical; Signal-anchor for type II membrane protein membrane pass occupies residues 53 to 73 (CYGVIMVLTVAVIALSVALSV). Topologically, residues 74–218 (RNKIPAMEDR…SRVGSVPRHV (145 aa)) are extracellular. Cysteines 90 and 101 form a disulfide. In terms of domain architecture, C-type lectin spans 97 to 201 (FGSKCFYFSE…SYTHRKWICS (105 aa)). An N-linked (GlcNAc...) asparagine glycan is attached at Asn-110. A disulfide bond links Cys-118 and Cys-200.

As to expression, detected in ileum, liver, kidney and in IL2-activated natural killer cells.

It localises to the cell membrane. Lectin-type cell surface receptor. The polypeptide is C-type lectin domain family 2 member H (Clec2h) (Mus musculus (Mouse)).